Here is a 475-residue protein sequence, read N- to C-terminus: MSPQTETKTGFGFKAGVKDYRLNYYTPEYETKDTDILAAFRMTPQPGVPPEEAGAAVAAESSTGTWTTVWTDGLTSLDRYKGRCYDIEPVAGEENQYIAYVAYPLDLFEEGSVTNMFTSIVGNVFGFKALRALRLEDLRVPPAYSKTFQGPPHGIQAERDKLNKYGRPLLGCTIKPKLGLSAKNYGRAVYECLRGGLDFTKDDENVNSQPFMRWRDRFLFVAEALFKSQAETGEVKGHYLNATAGTCEEMMKRAIFARELGAPIVMHDYLTGGFTANTSLAHYCRDNGLLLHIHRAMHAVIDRQRNHGMHFRVLAKALRMSGGDHVHAGTVVGKLEGEREVTLGFVDSLRDDYIEKDRSRGIYFTQDWVSMPGVFPVASGGIHVWHMPALTEIFGDDSVLQFGGGTLGHPWGNAPGAVANRVASEACVQARNEGRDLAREGNEIIREASKWSPELAAACEVWKEIKFEFETIDTL.

Residues 1–2 (MS) constitute a propeptide that is removed on maturation. Residue Pro-3 is modified to N-acetylproline. Residue Lys-14 is modified to N6,N6,N6-trimethyllysine. 2 residues coordinate substrate: Asn-123 and Thr-173. Lys-175 acts as the Proton acceptor in catalysis. Lys-177 lines the substrate pocket. 3 residues coordinate Mg(2+): Lys-201, Asp-203, and Glu-204. An N6-carboxylysine modification is found at Lys-201. His-294 functions as the Proton acceptor in the catalytic mechanism. Residues Arg-295, His-327, and Ser-379 each contribute to the substrate site.

It belongs to the RuBisCO large chain family. Type I subfamily. In terms of assembly, heterohexadecamer of 8 large chains and 8 small chains; disulfide-linked. The disulfide link is formed within the large subunit homodimers. It depends on Mg(2+) as a cofactor. The disulfide bond which can form in the large chain dimeric partners within the hexadecamer appears to be associated with oxidative stress and protein turnover.

It localises to the plastid. Its subcellular location is the chloroplast. The enzyme catalyses 2 (2R)-3-phosphoglycerate + 2 H(+) = D-ribulose 1,5-bisphosphate + CO2 + H2O. The catalysed reaction is D-ribulose 1,5-bisphosphate + O2 = 2-phosphoglycolate + (2R)-3-phosphoglycerate + 2 H(+). Functionally, ruBisCO catalyzes two reactions: the carboxylation of D-ribulose 1,5-bisphosphate, the primary event in carbon dioxide fixation, as well as the oxidative fragmentation of the pentose substrate in the photorespiration process. Both reactions occur simultaneously and in competition at the same active site. This Angiopteris lygodiifolia (Turnip fern) protein is Ribulose bisphosphate carboxylase large chain.